A 364-amino-acid polypeptide reads, in one-letter code: D-alanine--D-alanine ligase (364 aa).

The region spanning 134–344 (KVLLKSFNIP…YESLVDKLIT (211 aa)) is the ATP-grasp domain. 167-222 (NNKLNYPVIVKPSVLGSSIGINVAYNVSQIEKYIEEAFEYDLTVVVEKFIKAREIE) serves as a coordination point for ATP. Asp297, Glu311, and Asn313 together coordinate Mg(2+).

Belongs to the D-alanine--D-alanine ligase family. The cofactor is Mg(2+). Mn(2+) is required as a cofactor.

It is found in the cytoplasm. It carries out the reaction 2 D-alanine + ATP = D-alanyl-D-alanine + ADP + phosphate + H(+). It functions in the pathway cell wall biogenesis; peptidoglycan biosynthesis. Its function is as follows. Cell wall formation. The chain is D-alanine--D-alanine ligase from Borrelia recurrentis (strain A1).